Reading from the N-terminus, the 400-residue chain is Sensor histidine kinase LnrJ (400 aa).

Over 1 to 2 the chain is Extracellular; it reads MK. Residues 3–23 traverse the membrane as a helical segment; that stretch reads ALFFTRMFTLMVSCLMYLSIV. Residues 24–27 lie on the Cytoplasmic side of the membrane; the sequence is KEDN. A helical membrane pass occupies residues 28 to 48; the sequence is WFGYVFIAAGAAMYAANHVLL. Residues 49–61 lie on the Extracellular side of the membrane; sequence TKETNAIWFCLID. A helical transmembrane segment spans residues 62 to 82; the sequence is IAIGFSFGFIFPGTGLFIIML. Residues 83-101 are Cytoplasmic-facing; that stretch reads CPVAVAFFLRGFPKRTAWS. Residues 102 to 122 traverse the membrane as a helical segment; sequence VLCLSSILFLTVLIRTYAMFG. Over 123–125 the chain is Extracellular; sequence NEF. The helical transmembrane segment at 126 to 146 threads the bilayer; it reads VIDHLTSMTFVVFCGVVGKLI. Residues 147–400 are Cytoplasmic-facing; sequence RKLLDAQDTA…GPVQQKESLS (254 aa). The 196-residue stretch at 190-385 folds into the Histidine kinase domain; the sequence is IYERNRMARE…TVNAEFSLAN (196 aa). The residue at position 201 (H201) is a Phosphohistidine; by autocatalysis.

In terms of processing, autophosphorylated.

The protein localises to the cell membrane. The enzyme catalyses ATP + protein L-histidine = ADP + protein N-phospho-L-histidine.. Required for resistance to linearmycins, a family of antibiotic-specialized metabolites produced by some streptomycetes. Member of the two-component regulatory system LnrJ/LnrK, which induces expression of the LnrLMN ABC transporter in response to linearmycins and other polyenes. Acts as a specific sensor for linearmycin, either directly through binding or indirectly through membrane perturbation. Probably activates LnrK by phosphorylation. May also promote biofilm formation. The sequence is that of Sensor histidine kinase LnrJ from Bacillus subtilis (strain 168).